We begin with the raw amino-acid sequence, 202 residues long: NADH-quinone oxidoreductase subunit C (202 aa).

This sequence belongs to the complex I 30 kDa subunit family. NDH-1 is composed of 14 different subunits. Subunits NuoB, C, D, E, F, and G constitute the peripheral sector of the complex.

Its subcellular location is the cell inner membrane. It carries out the reaction a quinone + NADH + 5 H(+)(in) = a quinol + NAD(+) + 4 H(+)(out). Its function is as follows. NDH-1 shuttles electrons from NADH, via FMN and iron-sulfur (Fe-S) centers, to quinones in the respiratory chain. The immediate electron acceptor for the enzyme in this species is believed to be ubiquinone. Couples the redox reaction to proton translocation (for every two electrons transferred, four hydrogen ions are translocated across the cytoplasmic membrane), and thus conserves the redox energy in a proton gradient. This is NADH-quinone oxidoreductase subunit C from Acidovorax sp. (strain JS42).